A 280-amino-acid polypeptide reads, in one-letter code: Large ribosomal subunit protein uL2 (280 aa).

2 disordered regions span residues 1 to 47 (MAIR…NVHG) and 224 to 280 (VVMN…SKKR). Residues 23 to 33 (EITRSTPEKSL) are compositionally biased toward basic and acidic residues. Positions 37–47 (LPKKGGRNVHG) are enriched in basic residues. Positions 258–268 (RNPNRYSNNMI) are enriched in polar residues. Residues 270-280 (QRRRTNKSKKR) are compositionally biased toward basic residues.

This sequence belongs to the universal ribosomal protein uL2 family. In terms of assembly, part of the 50S ribosomal subunit. Forms a bridge to the 30S subunit in the 70S ribosome.

Its function is as follows. One of the primary rRNA binding proteins. Required for association of the 30S and 50S subunits to form the 70S ribosome, for tRNA binding and peptide bond formation. It has been suggested to have peptidyltransferase activity; this is somewhat controversial. Makes several contacts with the 16S rRNA in the 70S ribosome. This Corynebacterium diphtheriae (strain ATCC 700971 / NCTC 13129 / Biotype gravis) protein is Large ribosomal subunit protein uL2.